The following is a 200-amino-acid chain: ATP-dependent Clp protease proteolytic subunit (200 aa).

Ser103 (nucleophile) is an active-site residue. The active site involves His128.

Belongs to the peptidase S14 family. In terms of assembly, fourteen ClpP subunits assemble into 2 heptameric rings which stack back to back to give a disk-like structure with a central cavity, resembling the structure of eukaryotic proteasomes.

It is found in the cytoplasm. It catalyses the reaction Hydrolysis of proteins to small peptides in the presence of ATP and magnesium. alpha-casein is the usual test substrate. In the absence of ATP, only oligopeptides shorter than five residues are hydrolyzed (such as succinyl-Leu-Tyr-|-NHMec, and Leu-Tyr-Leu-|-Tyr-Trp, in which cleavage of the -Tyr-|-Leu- and -Tyr-|-Trp bonds also occurs).. Cleaves peptides in various proteins in a process that requires ATP hydrolysis. Has a chymotrypsin-like activity. Plays a major role in the degradation of misfolded proteins. This is ATP-dependent Clp protease proteolytic subunit from Vibrio vulnificus (strain CMCP6).